The primary structure comprises 83 residues: Consomatin Rs1 (83 aa).

A signal peptide spans 1–22 (MQTAYWVMVMMMVWITAPLSEG). The propeptide occupies 23 to 55 (GKLNNVIRGLVPDDVTPKRISQSLISRRRFDSR). A disulfide bond links C62 and C67. A D-tryptophan modification is found at W64. P68 carries the post-translational modification 4-hydroxyproline. The propeptide occupies 71-83 (LHGDNYDLKEKDK).

The protein belongs to the conotoxin C superfamily. Consomatin family. In terms of tissue distribution, expressed by the venom duct.

Its subcellular location is the secreted. In terms of biological role, moderately activates human somatostatin receptors (SSTR) with a preferential activation of SSTR1 and SSTR4. In vivo, does not cause behavioral changes in mice within a few minutes of intracranial injection, but causes a progressive loss of movement thereafter. Four to five hours after injection, mice recover, even with the highest dose tested. Shows antinociception and antihyperalgesia activities in two mouse models of acute pain, most probably by acting outside the central nervous system. This is Consomatin Rs1 from Conus raulsilvai (Sea snail).